A 26-amino-acid chain; its full sequence is Turripeptide OL57 (26 aa).

Contains 2 disulfide bonds. As to expression, expressed by the venom duct.

The protein resides in the secreted. Acts as a neurotoxin by inhibiting an ion channel. This chain is Turripeptide OL57, found in Iotyrris olangoensis (Sea snail).